The primary structure comprises 635 residues: tRNA 5-methylaminomethyl-2-thiouridine biosynthesis bifunctional protein MnmC (635 aa).

The tRNA (mnm(5)s(2)U34)-methyltransferase stretch occupies residues 1-227 (MSEPIDWLPD…KRSNLQAEFD (227 aa)). The FAD-dependent cmnm(5)s(2)U34 oxidoreductase stretch occupies residues 254–635 (IGGGLSGAAV…ALSTERLPAD (382 aa)).

In the N-terminal section; belongs to the methyltransferase superfamily. tRNA (mnm(5)s(2)U34)-methyltransferase family. This sequence in the C-terminal section; belongs to the DAO family. The cofactor is FAD.

The protein resides in the cytoplasm. The catalysed reaction is 5-aminomethyl-2-thiouridine(34) in tRNA + S-adenosyl-L-methionine = 5-methylaminomethyl-2-thiouridine(34) in tRNA + S-adenosyl-L-homocysteine + H(+). Its function is as follows. Catalyzes the last two steps in the biosynthesis of 5-methylaminomethyl-2-thiouridine (mnm(5)s(2)U) at the wobble position (U34) in tRNA. Catalyzes the FAD-dependent demodification of cmnm(5)s(2)U34 to nm(5)s(2)U34, followed by the transfer of a methyl group from S-adenosyl-L-methionine to nm(5)s(2)U34, to form mnm(5)s(2)U34. The protein is tRNA 5-methylaminomethyl-2-thiouridine biosynthesis bifunctional protein MnmC of Paracidovorax citrulli (strain AAC00-1) (Acidovorax citrulli).